A 437-amino-acid chain; its full sequence is UDP-N-acetylmuramate--L-alanine ligase (437 aa).

ATP is bound at residue Gly-108–Ser-114.

It belongs to the MurCDEF family.

The protein localises to the cytoplasm. It catalyses the reaction UDP-N-acetyl-alpha-D-muramate + L-alanine + ATP = UDP-N-acetyl-alpha-D-muramoyl-L-alanine + ADP + phosphate + H(+). It functions in the pathway cell wall biogenesis; peptidoglycan biosynthesis. Cell wall formation. The polypeptide is UDP-N-acetylmuramate--L-alanine ligase (Staphylococcus epidermidis (strain ATCC 12228 / FDA PCI 1200)).